A 146-amino-acid chain; its full sequence is Hemoglobin subunit delta (146 aa).

The region spanning 2 to 146 (HLTGEEKSAV…VATALAHKYH (145 aa)) is the Globin domain. S50 bears the Phosphoserine mark. Positions 63 and 92 each coordinate heme b.

This sequence belongs to the globin family. As to quaternary structure, heterotetramer of two delta chains and two alpha chains. Red blood cells.

This Leontocebus nigricollis (Black-mantled tamarin) protein is Hemoglobin subunit delta (HBD).